We begin with the raw amino-acid sequence, 246 residues long: Mast cell protease 2 (246 aa).

Positions 1-19 (MHRPPLPLVLLLLCCRAQA) are cleaved as a signal peptide. Residues 20–21 (GE) constitute a propeptide, activation peptide. The Peptidase S1 domain maps to 22-244 (IIGGTESKPH…YRPWIDEVLK (223 aa)). An intrachain disulfide couples Cys-51 to Cys-67. Catalysis depends on charge relay system residues His-66 and Asp-109. Asn-120 is a glycosylation site (N-linked (GlcNAc...) asparagine). 2 disulfides stabilise this stretch: Cys-143-Cys-208 and Cys-174-Cys-187. Residue Ser-202 is the Charge relay system of the active site.

This sequence belongs to the peptidase S1 family. Granzyme subfamily.

Its subcellular location is the secreted. It localises to the cytoplasmic granule. In terms of biological role, putative mast cell chymase. The protein is Mast cell protease 2 of Ovis aries (Sheep).